The sequence spans 439 residues: Ribosomal protein uS12 methylthiotransferase RimO (439 aa).

The 113-residue stretch at 7–119 folds into the MTTase N-terminal domain; the sequence is KQLCLISLGC…IDIMIAKKQN (113 aa). 6 residues coordinate [4Fe-4S] cluster: Cys-16, Cys-50, Cys-82, Cys-151, Cys-155, and Cys-158. Residues 137 to 368 form the Radical SAM core domain; sequence TGSSVHAYVK…ALKHQNHSFK (232 aa).

It belongs to the methylthiotransferase family. RimO subfamily. [4Fe-4S] cluster serves as cofactor.

The protein resides in the cytoplasm. The enzyme catalyses L-aspartate(89)-[ribosomal protein uS12]-hydrogen + (sulfur carrier)-SH + AH2 + 2 S-adenosyl-L-methionine = 3-methylsulfanyl-L-aspartate(89)-[ribosomal protein uS12]-hydrogen + (sulfur carrier)-H + 5'-deoxyadenosine + L-methionine + A + S-adenosyl-L-homocysteine + 2 H(+). In terms of biological role, catalyzes the methylthiolation of an aspartic acid residue of ribosomal protein uS12. This is Ribosomal protein uS12 methylthiotransferase RimO from Helicobacter pylori (strain ATCC 700392 / 26695) (Campylobacter pylori).